Reading from the N-terminus, the 566-residue chain is Liver carboxylesterase (566 aa).

The signal sequence occupies residues 1-18 (MWLLPLVLTSLASSATWA). Asparagine 80 carries N-linked (GlcNAc...) asparagine glycosylation. Residues cysteine 88 and cysteine 117 are joined by a disulfide bond. The active-site Acyl-ester intermediate is serine 222. The cysteines at positions 274 and 285 are disulfide-linked. The active-site Charge relay system is the glutamate 354. The residue at position 379 (serine 379) is a Phosphoserine. Histidine 467 (charge relay system) is an active-site residue. The Prevents secretion from ER motif lies at 563–566 (HAEL).

Belongs to the type-B carboxylesterase/lipase family.

It localises to the endoplasmic reticulum lumen. It catalyses the reaction a carboxylic ester + H2O = an alcohol + a carboxylate + H(+). Activated by CHAPS at concentrations of up to 130 mM, higher concentrations reduce activity. In the presence of CHAPS, activity is stimulated by non-ionic detergents. Inhibited by the esterase inhibitors diisopropylfluorophosphate and phenylmethylsulfonyl fluoride. Involved in the detoxification of xenobiotics and in the activation of ester and amide prodrugs. Active towards triacylglycerides containing short-chain fatty acids from C2 to C6, and 1(3)-monoacylglycerols containing fatty acids from C2 to C12. Inactive on long-chain triacylglycerols and diacylglycerol. Hydrolyzes aromatic and alkyl esters and vitamin A acetate. The hydrolysis rate depends upon the amino acid promoiety and the esterification site of the prodrug. Aromatic promoieties are favored, highest rates are observed with phenylalanyl progdrugs, hydrolysis of valyl and isoleucyl prodrugs is less efficient. With floxuridine prodrugs, activity is higher on 5' monoesters than on 3' monoesters. With gemcitabine prodrugs, activity is higher on 3' monoesters than on 5' monoesters. The protein is Liver carboxylesterase of Sus scrofa (Pig).